The primary structure comprises 882 residues: DNA mismatch repair protein MutS (882 aa).

656-663 is a binding site for ATP; the sequence is GPNASGKS.

Belongs to the DNA mismatch repair MutS family.

In terms of biological role, this protein is involved in the repair of mismatches in DNA. It is possible that it carries out the mismatch recognition step. This protein has a weak ATPase activity. In Synechococcus sp. (strain ATCC 27144 / PCC 6301 / SAUG 1402/1) (Anacystis nidulans), this protein is DNA mismatch repair protein MutS.